The following is a 130-amino-acid chain: Early 3 receptor internalization and degradation beta protein (130 aa).

The signal sequence occupies residues 1-19 (MKRSVIFVLLIFCALPVLC). A helical membrane pass occupies residues 53-77 (AWLYAIISVMVFCSTIFALAIYPYL). The segment at 122-125 (YFNL) is tyrosine-based sorting motif.

It belongs to the adenoviridae E3_RID-beta family. In terms of assembly, interacts with E3 RID-alpha and E3 CR1-alpha. In terms of processing, phosphorylated on serine. O-glycosylated, but not N-glycosylated.

It localises to the host membrane. Prevents infected cell apoptosis induced by the host immune system. Acts by down-regulating a number of cell surface receptors in the tumor necrosis factor (TNF) receptor superfamily, namely FAS, TNFRSF10A/TRAIL receptor 1, and TNFRSF10B/TRAIL receptor 2. Down-regulation of these death receptors protects adenovirus-infected cells from apoptosis induced by the death receptor ligands Fas ligand and TRAIL. RID complex also down-regulates certain tyrosine kinase cell surface receptors, especially the epidermal growth factor receptor (EGFR). RID-mediated Fas and EGFR down-regulation occurs via endocytosis of the receptors into endosomes followed by transport to and degradation within lysosomes. The protein is Early 3 receptor internalization and degradation beta protein of Human adenovirus C serotype 2 (HAdV-2).